A 416-amino-acid polypeptide reads, in one-letter code: Glutamyl-tRNA reductase (416 aa).

Substrate-binding positions include threonine 49–arginine 52, serine 105, glutamate 110–glutamine 112, and glutamine 116. The Nucleophile role is filled by cysteine 50. Glycine 185–isoleucine 190 contacts NADP(+).

It belongs to the glutamyl-tRNA reductase family. As to quaternary structure, homodimer.

The enzyme catalyses (S)-4-amino-5-oxopentanoate + tRNA(Glu) + NADP(+) = L-glutamyl-tRNA(Glu) + NADPH + H(+). It functions in the pathway porphyrin-containing compound metabolism; protoporphyrin-IX biosynthesis; 5-aminolevulinate from L-glutamyl-tRNA(Glu): step 1/2. Catalyzes the NADPH-dependent reduction of glutamyl-tRNA(Glu) to glutamate 1-semialdehyde (GSA). This chain is Glutamyl-tRNA reductase, found in Shewanella baltica (strain OS185).